We begin with the raw amino-acid sequence, 233 residues long: Segregation and condensation protein A (233 aa).

It belongs to the ScpA family. As to quaternary structure, component of a cohesin-like complex composed of ScpA, ScpB and the Smc homodimer, in which ScpA and ScpB bind to the head domain of Smc. The presence of the three proteins is required for the association of the complex with DNA.

The protein localises to the cytoplasm. Functionally, participates in chromosomal partition during cell division. May act via the formation of a condensin-like complex containing Smc and ScpB that pull DNA away from mid-cell into both cell halves. This is Segregation and condensation protein A from Streptococcus pyogenes serotype M1.